The primary structure comprises 647 residues: Starch synthase 1, chloroplastic/amyloplastic (647 aa).

The transit peptide at Met1–Arg41 directs the protein to the chloroplast. Over residues Pro66 to Pro91 the composition is skewed to pro residues. Residues Pro66–Val95 form a disordered region. Residue Lys153 participates in ADP-alpha-D-glucose binding.

The protein belongs to the glycosyltransferase 1 family. Bacterial/plant glycogen synthase subfamily.

Its subcellular location is the plastid. The protein localises to the chloroplast. It is found in the amyloplast. It catalyses the reaction [(1-&gt;4)-alpha-D-glucosyl](n) + ADP-alpha-D-glucose = [(1-&gt;4)-alpha-D-glucosyl](n+1) + ADP + H(+). It participates in glycan biosynthesis; starch biosynthesis. The chain is Starch synthase 1, chloroplastic/amyloplastic (WSSI-2) from Triticum aestivum (Wheat).